The sequence spans 566 residues: Arginine--tRNA ligase (566 aa).

The 'HIGH' region signature appears at 121 to 131 (ANPNGPFHIGH).

The protein belongs to the class-I aminoacyl-tRNA synthetase family.

It is found in the cytoplasm. It carries out the reaction tRNA(Arg) + L-arginine + ATP = L-arginyl-tRNA(Arg) + AMP + diphosphate. The protein is Arginine--tRNA ligase of Methanococcus maripaludis (strain DSM 14266 / JCM 13030 / NBRC 101832 / S2 / LL).